Here is a 209-residue protein sequence, read N- to C-terminus: Ribonuclease HII (209 aa).

One can recognise an RNase H type-2 domain in the interval 18–209 (SLVAGVDEVG…FKPVKALLER (192 aa)). A divalent metal cation-binding residues include Asp-24, Glu-25, and Asp-116.

The protein belongs to the RNase HII family. It depends on Mn(2+) as a cofactor. Requires Mg(2+) as cofactor.

The protein resides in the cytoplasm. The enzyme catalyses Endonucleolytic cleavage to 5'-phosphomonoester.. In terms of biological role, endonuclease that specifically degrades the RNA of RNA-DNA hybrids. This is Ribonuclease HII from Shewanella oneidensis (strain ATCC 700550 / JCM 31522 / CIP 106686 / LMG 19005 / NCIMB 14063 / MR-1).